The following is a 103-amino-acid chain: Large ribosomal subunit protein uL23 (103 aa).

The protein belongs to the universal ribosomal protein uL23 family. Part of the 50S ribosomal subunit. Contacts protein L29, and trigger factor when it is bound to the ribosome.

Its function is as follows. One of the early assembly proteins it binds 23S rRNA. One of the proteins that surrounds the polypeptide exit tunnel on the outside of the ribosome. Forms the main docking site for trigger factor binding to the ribosome. The chain is Large ribosomal subunit protein uL23 from Chlorobium luteolum (strain DSM 273 / BCRC 81028 / 2530) (Pelodictyon luteolum).